The following is a 305-amino-acid chain: tRNA dimethylallyltransferase (305 aa).

14-21 is a binding site for ATP; that stretch reads GPTTSGKT. 16–21 contacts substrate; the sequence is TTSGKT. Interaction with substrate tRNA regions lie at residues 39–42, 163–167, and 243–248; these read DSAL, QRITR, and RCVGYR.

It belongs to the IPP transferase family. In terms of assembly, monomer. Mg(2+) serves as cofactor.

It catalyses the reaction adenosine(37) in tRNA + dimethylallyl diphosphate = N(6)-dimethylallyladenosine(37) in tRNA + diphosphate. Functionally, catalyzes the transfer of a dimethylallyl group onto the adenine at position 37 in tRNAs that read codons beginning with uridine, leading to the formation of N6-(dimethylallyl)adenosine (i(6)A). This Ruthia magnifica subsp. Calyptogena magnifica protein is tRNA dimethylallyltransferase.